The following is a 58-amino-acid chain: uncharacterized protein (58 aa).

This is an uncharacterized protein from Yersinia enterocolitica.